The primary structure comprises 372 residues: DNA polymerase delta subunit 3 (372 aa).

Disordered stretches follow at residues 156–264 and 352–372; these read KKAP…NLDS and KKNT…FGKK. Residues 160–173 are compositionally biased toward polar residues; the sequence is STHSPQLSVPSKTS. S163 bears the Phosphoserine mark. Basic and acidic residues-rich tracts occupy residues 174–190 and 209–239; these read TIDK…KGKD and APLE…DDLK. Over residues 355 to 365 the composition is skewed to polar residues; the sequence is TAQSKPQQKSI.

As to quaternary structure, heterotetramer that consist of the pol3, cdc1, cdc27 and cdm1 subunits. Cdc27 interacts with cdc1 and is required for dimerization of the tetramer.

Its subcellular location is the nucleus. The sequence is that of DNA polymerase delta subunit 3 (cdc27) from Schizosaccharomyces pombe (strain 972 / ATCC 24843) (Fission yeast).